A 77-amino-acid chain; its full sequence is Large ribosomal subunit protein bL28 (77 aa).

The disordered stretch occupies residues 1–20 (MSRVCQVTGKGPVTGNNISH).

It belongs to the bacterial ribosomal protein bL28 family.

This Pseudomonas fluorescens (strain Pf0-1) protein is Large ribosomal subunit protein bL28.